The following is a 68-amino-acid chain: Cytochrome c3 (68 aa).

The heme site is built by His-17, His-20, Cys-26, Cys-29, His-30, His-45, Cys-49, Cys-52, His-53, Cys-62, Cys-65, and His-66.

In terms of processing, binds 3 heme groups per subunit.

Participates in sulfate respiration coupled with phosphorylation by transferring electrons from the enzyme dehydrogenase to ferredoxin. The polypeptide is Cytochrome c3 (cyd) (Desulfuromonas acetoxidans (Chloropseudomonas ethylica)).